Reading from the N-terminus, the 220-residue chain is Protein CREG1 (220 aa).

Positions 1–31 are cleaved as a signal peptide; the sequence is MAARAPELARSLLAALLAPALVALLVSPASG. The segment at 30-53 is disordered; the sequence is SGRGGRDHGDWDVDRRLPPLPPRE. Basic and acidic residues predominate over residues 33 to 53; that stretch reads GGRDHGDWDVDRRLPPLPPRE. Residues N160 and N216 are each glycosylated (N-linked (GlcNAc...) asparagine).

It belongs to the CREG family. Homodimer. Interacts with IGF2R; the interaction is dependent on glycosylation. In terms of processing, N-glycosylated. Widely expressed.

Its subcellular location is the secreted. Functionally, may contribute to the transcriptional control of cell growth and differentiation. Antagonizes transcriptional activation and cellular transformation by the adenovirus E1A protein. The transcriptional control activity of cell growth requires interaction with IGF2R. The protein is Protein CREG1 (Creg1) of Mus musculus (Mouse).